Reading from the N-terminus, the 314-residue chain is Secreted frizzled-related protein 5 (314 aa).

The signal sequence occupies residues 1-21 (MWVAWSARTAALALLLGALHG). In terms of domain architecture, FZ spans 45 to 162 (SKPPQCLDIP…PLDNDLCIAV (118 aa)). 8 disulfide bridges follow: C50/C113, C60/C106, C97/C132, C121/C159, C125/C149, C178/C250, C181/C252, and C195/C300. The NTR domain maps to 178 to 300 (CAQCEMEHSA…AVKFMFSYPC (123 aa)).

The protein belongs to the secreted frizzled-related protein (sFRP) family.

The protein resides in the secreted. Functionally, soluble frizzled-related proteins (sFRPS) function as modulators of Wnt signaling through direct interaction with Wnts. They have a role in regulating cell growth and differentiation in specific cell types. SFRP5 may be involved in determining the polarity of photoreceptor, and perhaps, other cells in the retina. In Mus musculus (Mouse), this protein is Secreted frizzled-related protein 5 (Sfrp5).